The sequence spans 101 residues: Urease subunit beta (101 aa).

It belongs to the urease beta subunit family. As to quaternary structure, heterotrimer of UreA (gamma), UreB (beta) and UreC (alpha) subunits. Three heterotrimers associate to form the active enzyme.

It localises to the cytoplasm. The catalysed reaction is urea + 2 H2O + H(+) = hydrogencarbonate + 2 NH4(+). It participates in nitrogen metabolism; urea degradation; CO(2) and NH(3) from urea (urease route): step 1/1. The protein is Urease subunit beta of Burkholderia thailandensis (strain ATCC 700388 / DSM 13276 / CCUG 48851 / CIP 106301 / E264).